A 53-amino-acid chain; its full sequence is Antilisterial bacteriocin subtilosin biosynthesis protein AlbB (53 aa).

Transmembrane regions (helical) follow at residues 8–28 (ILLY…FVKS) and 30–50 (YLFT…ARKA).

The protein localises to the cell membrane. Involved in the production of the bacteriocin subtilosin. Required for maximal production and for optimal immunity to subtilosin. This chain is Antilisterial bacteriocin subtilosin biosynthesis protein AlbB (albB), found in Bacillus subtilis (strain 168).